A 456-amino-acid chain; its full sequence is Exodeoxyribonuclease 7 large subunit (456 aa).

Belongs to the XseA family. Heterooligomer composed of large and small subunits.

It localises to the cytoplasm. It carries out the reaction Exonucleolytic cleavage in either 5'- to 3'- or 3'- to 5'-direction to yield nucleoside 5'-phosphates.. Its function is as follows. Bidirectionally degrades single-stranded DNA into large acid-insoluble oligonucleotides, which are then degraded further into small acid-soluble oligonucleotides. In Erwinia tasmaniensis (strain DSM 17950 / CFBP 7177 / CIP 109463 / NCPPB 4357 / Et1/99), this protein is Exodeoxyribonuclease 7 large subunit.